A 204-amino-acid chain; its full sequence is Somatotropin (204 aa).

The N-terminal stretch at 1-17 is a signal peptide; sequence MDRVVLMLSVLSLGVSS. Gln-18 carries the post-translational modification Pyrrolidone carboxylic acid. His-36 contributes to the Zn(2+) binding site. Cys-69 and Cys-177 form a disulfide bridge. Glu-186 provides a ligand contact to Zn(2+). The cysteines at positions 194 and 202 are disulfide-linked.

Belongs to the somatotropin/prolactin family.

The protein localises to the secreted. Growth hormone plays an important role in growth control and is involved in the regulation of several anabolic processes. Implicated as an osmoregulatory substance important for seawater adaptation. This chain is Somatotropin (gh), found in Acanthopagrus butcheri (Australian black bream).